The sequence spans 133 residues: Large ribosomal subunit protein bL17 (133 aa).

The protein belongs to the bacterial ribosomal protein bL17 family. Part of the 50S ribosomal subunit. Contacts protein L32.

The polypeptide is Large ribosomal subunit protein bL17 (Nitratidesulfovibrio vulgaris (strain ATCC 29579 / DSM 644 / CCUG 34227 / NCIMB 8303 / VKM B-1760 / Hildenborough) (Desulfovibrio vulgaris)).